The chain runs to 180 residues: ATP-dependent protease subunit HslV (180 aa).

Thr-5 is a catalytic residue. Na(+)-binding residues include Gly-161, Cys-164, and Thr-167.

This sequence belongs to the peptidase T1B family. HslV subfamily. A double ring-shaped homohexamer of HslV is capped on each side by a ring-shaped HslU homohexamer. The assembly of the HslU/HslV complex is dependent on binding of ATP.

It localises to the cytoplasm. It carries out the reaction ATP-dependent cleavage of peptide bonds with broad specificity.. Allosterically activated by HslU binding. Protease subunit of a proteasome-like degradation complex believed to be a general protein degrading machinery. The protein is ATP-dependent protease subunit HslV of Campylobacter jejuni subsp. jejuni serotype O:2 (strain ATCC 700819 / NCTC 11168).